The primary structure comprises 445 residues: Mitochondrial enolase superfamily member 1 (445 aa).

Residues 24–26 (GSD), Tyr34, and Lys220 each bind substrate. Lys222 (proton donor/acceptor) is an active-site residue. Residue Asp250 coordinates Mg(2+). Substrate is bound by residues Asn252, Glu276, Glu305, 355 to 357 (HAG), and Glu386. Residues Glu276 and Glu305 each contribute to the Mg(2+) site. His355 is an active-site residue.

It belongs to the mandelate racemase/muconate lactonizing enzyme family. ENOSF1 subfamily. It depends on Mg(2+) as a cofactor.

It localises to the mitochondrion. It catalyses the reaction L-fuconate = 2-dehydro-3-deoxy-L-fuconate + H2O. Its function is as follows. Plays a role in the catabolism of L-fucose, a sugar that is part of the carbohydrates that are attached to cellular glycoproteins. Catalyzes the dehydration of L-fuconate to 2-keto-3-deoxy-L-fuconate by the abstraction of the 2-proton to generate an enediolate intermediate that is stabilized by the magnesium ion. May down-regulate thymidylate synthase activity, possibly already at the RNA level, by promoting the degradation of TYMS mRNA via an antisense RNA-based mechanism. The chain is Mitochondrial enolase superfamily member 1 (enosf1) from Xenopus laevis (African clawed frog).